The following is a 391-amino-acid chain: Eukaryotic initiation factor 4A-3 (391 aa).

Positions 18 to 46 (ASFAEMGIKDDLLRGVYQYGFEKPSAIQQ) match the Q motif motif. The Helicase ATP-binding domain maps to 49-219 (VLPIISGRDV…SKFMTDPVRI (171 aa)). 62 to 69 (AQSGTGKT) contacts ATP. The DEAD box motif lies at 167 to 170 (DESD). The 162-residue stretch at 230 to 391 (GIKQFFVAVE…EMPMNVADLI (162 aa)) folds into the Helicase C-terminal domain.

It belongs to the DEAD box helicase family. eIF4A subfamily. As to quaternary structure, eIF4F is a multi-subunit complex, the composition of which varies with external and internal environmental conditions. It is composed of at least EIF4A, EIF4E and EIF4G.

It carries out the reaction ATP + H2O = ADP + phosphate + H(+). In terms of biological role, ATP-dependent RNA helicase which is a subunit of the eIF4F complex involved in cap recognition and is required for mRNA binding to ribosome. In the current model of translation initiation, eIF4A unwinds RNA secondary structures in the 5'-UTR of mRNAs which is necessary to allow efficient binding of the small ribosomal subunit, and subsequent scanning for the initiator codon. The protein is Eukaryotic initiation factor 4A-3 of Nicotiana plumbaginifolia (Leadwort-leaved tobacco).